The primary structure comprises 205 residues: MGAYKYLQELYKKKQSDAVRFLLRVRCWEYRNLPVCHRASHPTRVDKARRLGYKATQGFVVYRIRVRRGGRKRQVPGGRTGGKPKTHGVNELKPSRNLRSVAEERVGRRCPNLRVLNSYWVNQDSTYKYYEVILVDNSHNAIRNDPRYNWICKPVHKHRELRGLTSAGIKARGLRRKGTHRASKTRPSRQANYKRRNTVVFHRYR.

Disordered stretches follow at residues 70–90 (GRKRQVPGGRTGGKPKTHGVN) and 172–197 (RGLRRKGTHRASKTRPSRQANYKRRN).

This sequence belongs to the eukaryotic ribosomal protein eL15 family.

In Dictyostelium discoideum (Social amoeba), this protein is Large ribosomal subunit protein eL15 (rpl15-1).